Reading from the N-terminus, the 367-residue chain is MLCGGSRVLQHLSDHNHHNSIGLGLGFCGAKIVQLSSFFLRPSQAMAKSHHFSRKLRQRMISSFGSHCRTSGEVPILHNCFSQREDDPELPVEGLSPVSGGIVALGKFDALHIGHRELTIQASRIGAPYLLSFVGMAEVLGWEPRAPIVAKCDRQRVLTSWASYCGDRAPEEYEIEFASVRHLTPRQFVEKLSKELRVCGVVAGENYRFGYKASGDASELVRLCEECGITACIINSVMDMKQGSAKRDSGDSKDRGQVSSTRVRQALAAGDMRYVSELLGRAHRLILRVRTQDMPSERMISVPRSSILNLPPGIGIYKACLLLVGDESSVPCTVVVDTSNIHVETEEVRLCNLDWSQEFRLVSVEFG.

Residues 1 to 57 (MLCGGSRVLQHLSDHNHHNSIGLGLGFCGAKIVQLSSFFLRPSQAMAKSHHFSRKLR) constitute a chloroplast transit peptide.

Requires Mg(2+) as cofactor.

It is found in the plastid. Its subcellular location is the chloroplast. The catalysed reaction is FMN + ATP + H(+) = FAD + diphosphate. It participates in cofactor biosynthesis; FAD biosynthesis; FAD from FMN: step 1/1. Functionally, catalyzes the adenylation of flavin mononucleotide (FMN) to form flavin adenine dinucleotide (FAD) coenzyme. This is FAD synthetase 2, chloroplastic from Arabidopsis thaliana (Mouse-ear cress).